The chain runs to 492 residues: Adenosylhomocysteinase-like 2 (492 aa).

Positions 43–64 (FTGSSDEEDVSPKDNHQRNSAG) are disordered. Positions 192 and 217 each coordinate substrate. 218–220 (SVT) is a binding site for NAD(+). Residues lysine 247 and aspartate 251 each coordinate substrate. NAD(+) contacts are provided by residues 283-288 (GDVGKG), glutamate 304, 360-362 (MGH), asparagine 407, lysine 486, 486-490 (KANYY), and tyrosine 490.

Belongs to the adenosylhomocysteinase family. NAD(+) serves as cofactor.

Functionally, might play a role in the regulation of methionine metabolism. The chain is Adenosylhomocysteinase-like 2 from Drosophila melanogaster (Fruit fly).